Reading from the N-terminus, the 397-residue chain is Elongation factor Tu-1 (397 aa).

The region spanning K10–E206 is the tr-type G domain. The tract at residues G19–T26 is G1. A GTP-binding site is contributed by G19 to T26. Residue T26 coordinates Mg(2+). Positions G62–S66 are G2. The segment at D83–G86 is G3. GTP is bound by residues D83 to H87 and N138 to D141. Residues N138 to D141 are G4. The G5 stretch occupies residues S176–L178. T386 is subject to Phosphothreonine.

It belongs to the TRAFAC class translation factor GTPase superfamily. Classic translation factor GTPase family. EF-Tu/EF-1A subfamily. In terms of assembly, monomer. In terms of processing, phosphorylated on threonine and serine.

Its subcellular location is the cytoplasm. It carries out the reaction GTP + H2O = GDP + phosphate + H(+). In terms of biological role, GTP hydrolase that promotes the GTP-dependent binding of aminoacyl-tRNA to the A-site of ribosomes during protein biosynthesis. The sequence is that of Elongation factor Tu-1 from Streptomyces collinus.